We begin with the raw amino-acid sequence, 943 residues long: Isoleucine--tRNA ligase (943 aa).

A 'HIGH' region motif is present at residues 59–69 (PYANGQIHLGH). Residue Glu577 participates in L-isoleucyl-5'-AMP binding. The 'KMSKS' region signature appears at 618-622 (KMSKS). Lys621 is an ATP binding site. 4 residues coordinate Zn(2+): Cys906, Cys909, Cys926, and Cys929.

It belongs to the class-I aminoacyl-tRNA synthetase family. IleS type 1 subfamily. Monomer. Zn(2+) is required as a cofactor.

It is found in the cytoplasm. It catalyses the reaction tRNA(Ile) + L-isoleucine + ATP = L-isoleucyl-tRNA(Ile) + AMP + diphosphate. In terms of biological role, catalyzes the attachment of isoleucine to tRNA(Ile). As IleRS can inadvertently accommodate and process structurally similar amino acids such as valine, to avoid such errors it has two additional distinct tRNA(Ile)-dependent editing activities. One activity is designated as 'pretransfer' editing and involves the hydrolysis of activated Val-AMP. The other activity is designated 'posttransfer' editing and involves deacylation of mischarged Val-tRNA(Ile). The sequence is that of Isoleucine--tRNA ligase from Xanthomonas campestris pv. campestris (strain B100).